A 142-amino-acid polypeptide reads, in one-letter code: MVLSPTDKSIVKAAWEKVGAHAGDYGAEALERMFLSFPTTKTYFPQFDLSHGSAQVKGHGKKVADALTNAVLHVDDMPSALSALSDLHAHKLTVDPVNFKLLSHCLLVTLACHLPAEFTPAVHASLDKFMASVSTVLTSKYR.

Residues 2-142 (VLSPTDKSIV…VSTVLTSKYR (141 aa)) enclose the Globin domain. Position 59 (His-59) interacts with O2. Residue His-88 participates in heme b binding.

Belongs to the globin family. As to quaternary structure, heterotetramer of two alpha chains and two beta chains. As to expression, red blood cells.

In terms of biological role, involved in oxygen transport from the lung to the various peripheral tissues. This chain is Hemoglobin subunit alpha-A (HBAA), found in Otolemur crassicaudatus (Brown greater galago).